We begin with the raw amino-acid sequence, 539 residues long: Polyol transporter 5 (539 aa).

Positions 1-11 (MTGATPENRTA) are enriched in polar residues. The segment at 1–24 (MTGATPENRTAPSPPPVKHVPESV) is disordered. The next 12 membrane-spanning stretches (helical) occupy residues 37 to 57 (FACAILASMTSILLGYDIGVM), 73 to 93 (LQIGILAGSLNIYSLIGSCAA), 104 to 124 (YTIVLAGAIFFAGAILMGLSP), 127 to 147 (AFLMFGRFIAGIGVGYALMIA), 165 to 185 (SFPEVFINAGIMLGYVSNLAF), 196 to 216 (LMLGIGAVPSVILAIGVLAMP), 296 to 316 (IAAIGIHFFQQASGIDAVVLF), 333 to 353 (LLATVAVGVVKTSFILVATFL), 364 to 384 (LTSVGGMVLSLAALGTSLTII), 391 to 411 (VMWAVVVAIATVMTYVATFSI), 433 to 453 (GSSMGVVVNRVTSGVISISFL), and 463 to 483 (GAFYLFGGIATVAWVFFYTFL). 2 stretches are compositionally biased toward basic and acidic residues: residues 503–514 (WRDSKSKPKGNP) and 530–539 (QWKEGDTQSS). A disordered region spans residues 503–539 (WRDSKSKPKGNPEKTVPNPEVEIGSNKQWKEGDTQSS).

It belongs to the major facilitator superfamily. Sugar transporter (TC 2.A.1.1) family. As to expression, highly expressed in roots. Expressed in vascular tissue of leaves, sepals and siliques.

The protein resides in the cell membrane. Plasma membrane broad-spectrum sugar-proton symporter. Mediates the uptake of linear polyols such as sorbitol, xylitol, erythritol or glycerol. Can transport the cyclic polyol myo-inositol and different hexoses, pentoses (including ribose), tetroses and sugar alcohols. This chain is Polyol transporter 5 (PLT5), found in Arabidopsis thaliana (Mouse-ear cress).